The chain runs to 311 residues: Peptide methionine sulfoxide reductase MsrA/MsrB (311 aa).

The tract at residues 1–155 is peptide methionine sulfoxide reductase A; the sequence is MAEIYLAGGC…PGGYCHINVN (155 aa). Cysteine 10 is an active-site residue. In terms of domain architecture, MsrB spans 172 to 295; that stretch reads DAELKEQLTQ…NSAALRFIPK (124 aa). Cysteine 284 (nucleophile) is an active-site residue.

It in the N-terminal section; belongs to the MsrA Met sulfoxide reductase family. This sequence in the C-terminal section; belongs to the MsrB Met sulfoxide reductase family.

It catalyses the reaction L-methionyl-[protein] + [thioredoxin]-disulfide + H2O = L-methionyl-(S)-S-oxide-[protein] + [thioredoxin]-dithiol. The enzyme catalyses [thioredoxin]-disulfide + L-methionine + H2O = L-methionine (S)-S-oxide + [thioredoxin]-dithiol. It carries out the reaction L-methionyl-[protein] + [thioredoxin]-disulfide + H2O = L-methionyl-(R)-S-oxide-[protein] + [thioredoxin]-dithiol. Functionally, has an important function as a repair enzyme for proteins that have been inactivated by oxidation. Catalyzes the reversible oxidation-reduction of methionine sulfoxide in proteins to methionine. Involved in protection against oxidative stress when the bacterium enters the host bloodstream and required for maximal growth under aerobic and anaerobic conditions. This Streptococcus gordonii (strain Challis / ATCC 35105 / BCRC 15272 / CH1 / DL1 / V288) protein is Peptide methionine sulfoxide reductase MsrA/MsrB (msrAB).